The following is a 380-amino-acid chain: Flagellar P-ring protein (380 aa).

An N-terminal signal peptide occupies residues 1-35 (MRFFTQSPFPLRTLTRRLTAFVCVGLLLLPGFTLA).

It belongs to the FlgI family. As to quaternary structure, the basal body constitutes a major portion of the flagellar organelle and consists of four rings (L,P,S, and M) mounted on a central rod.

The protein resides in the periplasm. It localises to the bacterial flagellum basal body. Its function is as follows. Assembles around the rod to form the L-ring and probably protects the motor/basal body from shearing forces during rotation. The protein is Flagellar P-ring protein of Gluconobacter oxydans (strain 621H) (Gluconobacter suboxydans).